The primary structure comprises 130 residues: Transcription antitermination protein NusB (130 aa).

It belongs to the NusB family.

Involved in transcription antitermination. Required for transcription of ribosomal RNA (rRNA) genes. Binds specifically to the boxA antiterminator sequence of the ribosomal RNA (rrn) operons. This is Transcription antitermination protein NusB from Macrococcus caseolyticus (strain JCSC5402) (Macrococcoides caseolyticum).